Consider the following 249-residue polypeptide: L-fucose operon activator (249 aa).

Residues 1 to 56 (MNYRDELILQWVNQQGKASVIELAQHCDISVETIRRDLNKLANKGLLHRTHGGAVS) enclose the HTH deoR-type domain. A DNA-binding region (H-T-H motif) is located at residues 18–37 (ASVIELAQHCDISVETIRRD).

Functionally, transcriptional activator of the fuc operon. This Haemophilus influenzae (strain ATCC 51907 / DSM 11121 / KW20 / Rd) protein is L-fucose operon activator (fucR).